Consider the following 80-residue polypeptide: Defensin-like protein 207 (80 aa).

A signal peptide spans 1 to 29 (MAKNLNSVSFIVLLLVLLVASTEILKSDA). 3 cysteine pairs are disulfide-bonded: Cys38–Cys64, Cys50–Cys75, and Cys54–Cys77.

The protein belongs to the DEFL family.

It localises to the secreted. In Arabidopsis thaliana (Mouse-ear cress), this protein is Defensin-like protein 207.